A 345-amino-acid polypeptide reads, in one-letter code: rRNA 2'-O-methyltransferase fibrillarin (345 aa).

Residues 1 to 114 (MGKPGFSPRG…GFKGGKTVTI (114 aa)) form a disordered region. The segment covering 8-108 (PRGGGGGGGG…RGGGAGGFKG (101 aa)) has biased composition (gly residues). Residues Arg-9, Arg-23, Arg-25, Arg-41, Arg-43, Arg-49, Arg-52, Arg-59, Arg-64, Arg-72, Arg-78, Arg-84, Arg-89, Arg-94, and Arg-99 each carry the asymmetric dimethylarginine modification. S-adenosyl-L-methionine is bound by residues 198 to 199 (TT), 217 to 218 (EF), 242 to 243 (DA), and 262 to 265 (DVAQ).

It belongs to the methyltransferase superfamily. Fibrillarin family. As to quaternary structure, component of box C/D small nucleolar ribonucleoprotein (snoRNP) particles. It is associated with the U3, U8 and U13 small nuclear RNAs. In terms of processing, by homology to other fibrillarins, some or all of the N-terminal domain arginines are modified to asymmetric dimethylarginine (DMA).

It is found in the nucleus. The protein localises to the nucleolus. The enzyme catalyses L-glutaminyl-[histone H2A] + S-adenosyl-L-methionine = N(5)-methyl-L-glutaminyl-[histone H2A] + S-adenosyl-L-homocysteine + H(+). S-adenosyl-L-methionine-dependent methyltransferase that has the ability to methylate both RNAs and proteins. Involved in pre-rRNA processing. Utilizes the methyl donor S-adenosyl-L-methionine to catalyze the site-specific 2'-hydroxyl methylation of ribose moieties in pre-ribosomal RNA. Site specificity is provided by a guide RNA that base pairs with the substrate. Methylation occurs at a characteristic distance from the sequence involved in base pairing with the guide RNA. Also acts as a protein methyltransferase by mediating methylation of 'Gln-105' of histone H2A (H2AQ105me), a modification that impairs binding of the FACT complex and is specifically present at 35S ribosomal DNA locus. This Drosophila erecta (Fruit fly) protein is rRNA 2'-O-methyltransferase fibrillarin.